Reading from the N-terminus, the 412-residue chain is FAD-dependent monooxygenase nscC (412 aa).

Residues 1–21 (MGKQQETILIIGAGISGLATS) form the signal peptide. Glu35 and Ala46 together coordinate FAD. Asn92 carries N-linked (GlcNAc...) asparagine glycosylation. An FAD-binding site is contributed by Arg119. 2 N-linked (GlcNAc...) asparagine glycosylation sites follow: Asn170 and Asn231. Positions 326 and 339 each coordinate FAD.

It belongs to the paxM FAD-dependent monooxygenase family. FAD is required as a cofactor.

Its pathway is secondary metabolite biosynthesis. In terms of biological role, FAD-dependent monooxygenase; part of the gene cluster that mediates the biosynthesis of neosartoricin B, a prenylated anthracenone that probably exhibits T-cell antiproliferative activity, suggestive of a physiological role as an immunosuppressive agent. The non-reducing polyketide synthase nscA probably synthesizes and cyclizes the decaketide backbone. The hydrolase nscB then mediates the product release through hydrolysis followed by spontaneous decarboxylation. The prenyltransferase nscD catalyzes the addition of the dimethylallyl group to the aromatic C5. The FAD-dependent monooxygenase nscC is then responsible for the stereospecific hydroxylation at C2. Neosartoricin B can be converted into two additional compounds neosartoricins C and D. Neosartoricin C is a spirocyclic compound that is cyclized through the attack of C3 hydroxyl on C14, followed by dehydration. On the other hand, neosartoricin D is a further cyclized compound in which attack of C2 on C14 in neosartoricin C results in the formation of the acetal-containing dioxabicyclo-octanone ring. Both of these compounds are novel and possibly represent related metabolites of the gene cluster. This Trichophyton tonsurans (strain CBS 112818) (Scalp ringworm fungus) protein is FAD-dependent monooxygenase nscC.